The primary structure comprises 258 residues: Synapse differentiation-inducing gene protein 1 (258 aa).

At 1–181 (MDGIIEQKSV…NFLMMPPRDH (181 aa)) the chain is on the cytoplasmic side. Serine 137 is modified (phosphoserine). A helical transmembrane segment spans residues 182–202 (LGLSVFSMLCCFWPLGIAAFY). The Extracellular portion of the chain corresponds to 203-228 (LSHETNKAVAKGDFHQASTSSRRALF). The helical intramembrane region spans 229-249 (LAVLSITIGTGIYVGVAVALI). At 250-258 (AYLSKNNHL) the chain is on the extracellular side.

The protein belongs to the CD225/Dispanin family. In terms of assembly, homodimer. Interacts with GRIA1 and GRIA2. In terms of tissue distribution, brain-specific. Expressed in Purkinje neurons in cerebellum. Also detected in the hippocampus. Found at excitatory synapses and postsynaptic cells.

It localises to the cell membrane. The protein resides in the early endosome membrane. It is found in the postsynaptic density membrane. The protein localises to the synapse. Its subcellular location is the cell projection. It localises to the dendrite. The protein resides in the dendritic spine. In terms of biological role, may regulate AMPA receptor content at nascent synapses, and have a role in postsynaptic development and maturation. This chain is Synapse differentiation-inducing gene protein 1 (Syndig1), found in Mus musculus (Mouse).